The following is a 167-amino-acid chain: Large ribosomal subunit protein uL10 (167 aa).

The protein belongs to the universal ribosomal protein uL10 family. As to quaternary structure, part of the ribosomal stalk of the 50S ribosomal subunit. The N-terminus interacts with L11 and the large rRNA to form the base of the stalk. The C-terminus forms an elongated spine to which L12 dimers bind in a sequential fashion forming a multimeric L10(L12)X complex.

Functionally, forms part of the ribosomal stalk, playing a central role in the interaction of the ribosome with GTP-bound translation factors. This chain is Large ribosomal subunit protein uL10, found in Mycoplasma mobile (strain ATCC 43663 / 163K / NCTC 11711) (Mesomycoplasma mobile).